Reading from the N-terminus, the 215-residue chain is Cytochrome c biogenesis ATP-binding export protein CcmA (215 aa).

Residues 3 to 211 (LTAENLAARR…KMTGFAGVDR (209 aa)) enclose the ABC transporter domain. Residue 35–42 (GRNGSGKS) coordinates ATP.

Belongs to the ABC transporter superfamily. CcmA exporter (TC 3.A.1.107) family. In terms of assembly, the complex is composed of two ATP-binding proteins (CcmA) and two transmembrane proteins (CcmB).

It is found in the cell inner membrane. The enzyme catalyses heme b(in) + ATP + H2O = heme b(out) + ADP + phosphate + H(+). In terms of biological role, part of the ABC transporter complex CcmAB involved in the biogenesis of c-type cytochromes; once thought to export heme, this seems not to be the case, but its exact role is uncertain. Responsible for energy coupling to the transport system. The sequence is that of Cytochrome c biogenesis ATP-binding export protein CcmA from Rhizobium etli (strain ATCC 51251 / DSM 11541 / JCM 21823 / NBRC 15573 / CFN 42).